Consider the following 119-residue polypeptide: Holo-[acyl-carrier-protein] synthase (119 aa).

2 residues coordinate Mg(2+): aspartate 7 and glutamate 56.

Belongs to the P-Pant transferase superfamily. AcpS family. Mg(2+) is required as a cofactor.

It localises to the cytoplasm. It catalyses the reaction apo-[ACP] + CoA = holo-[ACP] + adenosine 3',5'-bisphosphate + H(+). In terms of biological role, transfers the 4'-phosphopantetheine moiety from coenzyme A to a Ser of acyl-carrier-protein. The protein is Holo-[acyl-carrier-protein] synthase of Chlamydia trachomatis serovar L2 (strain ATCC VR-902B / DSM 19102 / 434/Bu).